Consider the following 788-residue polypeptide: 5-methyltetrahydropteroyltriglutamate--homocysteine methyltransferase (788 aa).

5-methyltetrahydropteroyltri-L-glutamate is bound by residues 24–27 (RELK) and lysine 140. Residues 463-465 (IGS) and glutamate 516 contribute to the L-homocysteine site. L-methionine is bound by residues 463 to 465 (IGS) and glutamate 516. Residues 547–548 (RC) and tryptophan 593 each bind 5-methyltetrahydropteroyltri-L-glutamate. Aspartate 631 contacts L-homocysteine. An L-methionine-binding site is contributed by aspartate 631. Glutamate 637 provides a ligand contact to 5-methyltetrahydropteroyltri-L-glutamate. Zn(2+) contacts are provided by histidine 673, cysteine 675, and glutamate 697. Catalysis depends on histidine 726, which acts as the Proton donor. Cysteine 758 lines the Zn(2+) pocket.

The protein belongs to the vitamin-B12 independent methionine synthase family. Requires Zn(2+) as cofactor.

It catalyses the reaction 5-methyltetrahydropteroyltri-L-glutamate + L-homocysteine = tetrahydropteroyltri-L-glutamate + L-methionine. The protein operates within amino-acid biosynthesis; L-methionine biosynthesis via de novo pathway; L-methionine from L-homocysteine (MetE route): step 1/1. Functionally, catalyzes the transfer of a methyl group from 5-methyltetrahydrofolate to homocysteine resulting in methionine formation. The polypeptide is 5-methyltetrahydropteroyltriglutamate--homocysteine methyltransferase (Rhodopseudomonas palustris (strain ATCC BAA-98 / CGA009)).